The primary structure comprises 657 residues: Protein mono-ADP-ribosyltransferase TIPARP (657 aa).

Acidic residues predominate over residues 1 to 10; sequence MEMETTEPEP. Residues 1–21 are disordered; sequence MEMETTEPEPDCVVQPPSPPD. C39 carries the ADP-ribosylcysteine modification. The short motif at 41–47 is the Nuclear localization signal element; the sequence is KKKDQKR. The C3H1-type zinc finger occupies 237–264; sequence ENGIEICMDFLQGTCIYGRDCLKHHTVL. The WWE domain maps to 332–410; sequence STPPSSNVNS…RRPLFRSCFI (79 aa). The region spanning 449–657 is the PARP catalytic domain; the sequence is YPETWVYMHP…YEEVSNTVSI (209 aa).

The protein belongs to the ARTD/PARP family. In terms of assembly, interacts with AHR. Auto-mono-ADP-ribosylated.

Its subcellular location is the nucleus. It carries out the reaction L-aspartyl-[protein] + NAD(+) = 4-O-(ADP-D-ribosyl)-L-aspartyl-[protein] + nicotinamide. The catalysed reaction is L-glutamyl-[protein] + NAD(+) = 5-O-(ADP-D-ribosyl)-L-glutamyl-[protein] + nicotinamide. The enzyme catalyses L-cysteinyl-[protein] + NAD(+) = S-(ADP-D-ribosyl)-L-cysteinyl-[protein] + nicotinamide + H(+). With respect to regulation, ADP-ribosyltransferase activity is inhibited by PJ34; inhibition is however not specific to TIPARP and other PARP-domain containing proteins are also inhibited by PJ34. Partially inhibited by KU0058948. In terms of biological role, ADP-ribosyltransferase that mediates mono-ADP-ribosylation of glutamate, aspartate and cysteine residues on target proteins. Acts as a negative regulator of AHR by mediating mono-ADP-ribosylation of AHR, leading to inhibit transcription activator activity of AHR. This chain is Protein mono-ADP-ribosyltransferase TIPARP, found in Homo sapiens (Human).